Reading from the N-terminus, the 231-residue chain is Eukaryotic translation initiation factor 4E-1 (231 aa).

EIF4G-binding stretches follow at residues 56–59 (HPLE) and 66–102 (FDNPTTKSRQTAWGSSLRNVYTFSTVEDFWGAYNNIH). MRNA contacts are provided by residues 74-79 (RQTAWG), lysine 106, and 124-125 (WE). A disulfide bond links cysteine 129 and cysteine 167. Residues 150 to 159 (YTLLAMIGHQ) form an EIF4G-binding region. MRNA contacts are provided by residues 174-179 (RAKGEK) and 219-223 (KRLDR).

It belongs to the eukaryotic initiation factor 4E family. In terms of assembly, EIF4F is a multi-subunit complex, the composition of which varies with external and internal environmental conditions. It is composed of at least EIF4A, EIF4E and EIF4G. EIF4E is also known to interact with other partners. In higher plants two isoforms of EIF4F have been identified, named isoform EIF4F and isoform EIF(iso)4F. Isoform EIF4F has subunits p220 and p26, whereas isoform EIF(iso)4F has subunits p82 and p28. (Microbial infection) Interacts with potyvirus viral genome-linked protein (VPg); mostly with tobacco etch virus (TEV-HAT) VPg and, to a lower extent, with potato virus Y (PVY-LYE84 and PVY-LYE90) and pepper mottle virus (PepMoV) VPg. Post-translationally, according to the redox status, the Cys-129-Cys-167 disulfide bridge may have a role in regulating protein function by affecting its ability to bind capped mRNA.

It is found in the nucleus. The protein localises to the cytoplasm. In terms of biological role, component of the protein complex eIF4F, which is involved in the recognition of the mRNA cap, ATP-dependent unwinding of 5'-terminal secondary structure and recruitment of mRNA to the ribosome. Recognizes and binds the 7-methylguanosine-containing mRNA cap during an early step in the initiation of protein synthesis and facilitates ribosome binding by inducing the unwinding of the mRNAs secondary structures. Key component of recessive resistance to potyviruses. Functionally, (Microbial infection) Susceptibility host factor required for viral infection (e.g. potato virus Y (PVY), pepper mottle virus (PepMoV) and tobacco etch virus (TEV)) by recruiting viral RNAs to the host ribosomal complex via an interaction with viral genome-linked protein (VPg). In Solanum lycopersicum (Tomato), this protein is Eukaryotic translation initiation factor 4E-1.